Here is a 217-residue protein sequence, read N- to C-terminus: 3,4-dihydroxy-2-butanone 4-phosphate synthase (217 aa).

Residues 37–38, aspartate 42, 150–154, and glutamate 174 contribute to the D-ribulose 5-phosphate site; these read RE and RGGHT. Residue glutamate 38 coordinates Mg(2+). Histidine 153 contributes to the Mg(2+) binding site.

This sequence belongs to the DHBP synthase family. As to quaternary structure, homodimer. Mg(2+) is required as a cofactor. The cofactor is Mn(2+).

It carries out the reaction D-ribulose 5-phosphate = (2S)-2-hydroxy-3-oxobutyl phosphate + formate + H(+). It participates in cofactor biosynthesis; riboflavin biosynthesis; 2-hydroxy-3-oxobutyl phosphate from D-ribulose 5-phosphate: step 1/1. Functionally, catalyzes the conversion of D-ribulose 5-phosphate to formate and 3,4-dihydroxy-2-butanone 4-phosphate. In Pectobacterium atrosepticum (strain SCRI 1043 / ATCC BAA-672) (Erwinia carotovora subsp. atroseptica), this protein is 3,4-dihydroxy-2-butanone 4-phosphate synthase.